We begin with the raw amino-acid sequence, 169 residues long: Peptide deformylase (169 aa).

Residues Cys91 and His133 each coordinate Fe cation. Glu134 is a catalytic residue. Residue His137 participates in Fe cation binding.

Belongs to the polypeptide deformylase family. The cofactor is Fe(2+).

The catalysed reaction is N-terminal N-formyl-L-methionyl-[peptide] + H2O = N-terminal L-methionyl-[peptide] + formate. Its function is as follows. Removes the formyl group from the N-terminal Met of newly synthesized proteins. Requires at least a dipeptide for an efficient rate of reaction. N-terminal L-methionine is a prerequisite for activity but the enzyme has broad specificity at other positions. This is Peptide deformylase from Haemophilus influenzae (strain ATCC 51907 / DSM 11121 / KW20 / Rd).